The following is a 331-amino-acid chain: Adenosine deaminase (331 aa).

Zn(2+) is bound by residues histidine 12 and histidine 14. Substrate contacts are provided by histidine 14, aspartate 16, and glycine 170. Residue histidine 197 coordinates Zn(2+). The Proton donor role is filled by glutamate 200. Zn(2+) is bound at residue aspartate 278. Aspartate 279 serves as a coordination point for substrate.

Belongs to the metallo-dependent hydrolases superfamily. Adenosine and AMP deaminases family. Adenosine deaminase subfamily. Zn(2+) is required as a cofactor.

It carries out the reaction adenosine + H2O + H(+) = inosine + NH4(+). The enzyme catalyses 2'-deoxyadenosine + H2O + H(+) = 2'-deoxyinosine + NH4(+). Functionally, catalyzes the hydrolytic deamination of adenosine and 2-deoxyadenosine. This chain is Adenosine deaminase, found in Shewanella denitrificans (strain OS217 / ATCC BAA-1090 / DSM 15013).